The sequence spans 284 residues: MSEERRMRIGVVGYGHIGKYLVDKIVREGANHSMELAFVWNRRREKLSGAVDPRLQLQDLSDCQKWAADLIVEVAHPCITREYGEKFLSVAHFLVGSPTALADTVTEAKLRERARLSGNTLYVPCGALWGAEDIFKMAERGTLKALRITMTKHPNSFKLEGDLVQKNQEAMSNRTVLYEGPVRGLCPLAPNNVNTMAAACMAAHTLGFDGVVGVLVSDPSVPDWHFVDIEVTGGTIEKTGQVFSVKTSRRNPAAPCSVTGSATFASFWSSLLACKGHGGRVYIC.

It belongs to the L-aspartate dehydrogenase family.

This Xenopus tropicalis (Western clawed frog) protein is Aspartate dehydrogenase domain-containing protein (aspdh).